The sequence spans 1634 residues: DNA polymerase (1634 aa).

2 consecutive DOD-type homing endonuclease domains span residues 552 to 693 (LIGI…RLGI) and 1163 to 1295 (FLGF…LVGI).

The protein belongs to the DNA polymerase type-B family. This protein undergoes a protein self splicing that involves a post-translational excision of the intervening region (intein) followed by peptide ligation.

The enzyme catalyses DNA(n) + a 2'-deoxyribonucleoside 5'-triphosphate = DNA(n+1) + diphosphate. In Methanocaldococcus jannaschii (strain ATCC 43067 / DSM 2661 / JAL-1 / JCM 10045 / NBRC 100440) (Methanococcus jannaschii), this protein is DNA polymerase (pol).